Reading from the N-terminus, the 444-residue chain is MGDVNFLQKAIQIVQQATEQDNAKNYAEAHRLYIQSLEWFTTALKYEKSERSKATIKAKTLEYLQRAEQLKEYLDKSKNKKPVAVGGNKSNSAGSANGAGKSAKEDDEDMDPEDKKRNDSLSSSIVTTKPNVKWDDVAGLYQAKEYLKEAVIFPIKFPQMFTGNRKPWKGILLYGPPGTGKSYLAKAVATEISSTFFSISPSDIVTKWLGDSEKLVKQLFEMAREKNNSVIFIDEVDSLCSSRNDQESESARRIKTEFLIQMNGVGNDSDGILVLAATNIPWGLDLAIRRRFEKRIYIGLPEPQARAKMFQIHIGSTPNTLVQADYKKLADLTEGYSGSDIGSLVKDAIMQPVRAVQCATHFKQIRAPSREDPSVMTDYVTPCSPGDPLAQEMTWMDIDPTKLKEPEITIADCLKSLRVIKPSVNKADLDRYVEFTNDFGQDGV.

One can recognise an MIT domain in the interval 2–80 (GDVNFLQKAI…KEYLDKSKNK (79 aa)). The segment at 79–122 (NKKPVAVGGNKSNSAGSANGAGKSAKEDDEDMDPEDKKRNDSLS) is disordered. A compositionally biased stretch (low complexity) spans 86–101 (GGNKSNSAGSANGAGK). 175-182 (GPPGTGKS) is a binding site for ATP.

Belongs to the AAA ATPase family.

The protein resides in the prevacuolar compartment membrane. Its subcellular location is the endosome membrane. The enzyme catalyses ATP + H2O = ADP + phosphate + H(+). Involved in intracellular protein transport probably out of a prevacuolar endosomal compartment. May be involved in the release of components of the bilayered coat from the endosomal membrane. The association with ESCRT-III complex mediates the ATP-dependent disassembly of the ESCRT-III complex. In Dictyostelium discoideum (Social amoeba), this protein is Vacuolar protein sorting-associated protein 4 (vps4).